A 63-amino-acid chain; its full sequence is Ferredoxin (63 aa).

The 4Fe-4S ferredoxin-type domain occupies 3-31; the sequence is WKVSVDVDTCIGDAICASLCPDVFEMGDD. Residues C12, D15, and C18 each contribute to the [4Fe-4S] cluster site. A disulfide bond links C22 and C45. C53 serves as a coordination point for [4Fe-4S] cluster.

[4Fe-4S] cluster is required as a cofactor. The cofactor is [3Fe-4S] cluster.

Its function is as follows. Ferredoxins are iron-sulfur proteins that transfer electrons in a wide variety of metabolic reactions. In Thermococcus kodakarensis (strain ATCC BAA-918 / JCM 12380 / KOD1) (Pyrococcus kodakaraensis (strain KOD1)), this protein is Ferredoxin (fdxA).